A 237-amino-acid polypeptide reads, in one-letter code: Purine nucleoside phosphorylase DeoD-type (237 aa).

Residue H4 participates in a purine D-ribonucleoside binding. Residues G20, R24, R43, and 87 to 90 (RVGT) contribute to the phosphate site. A purine D-ribonucleoside-binding positions include 180–182 (EME) and 204–205 (SD). D205 functions as the Proton donor in the catalytic mechanism.

It belongs to the PNP/UDP phosphorylase family. In terms of assembly, homohexamer; trimer of homodimers.

It catalyses the reaction a purine D-ribonucleoside + phosphate = a purine nucleobase + alpha-D-ribose 1-phosphate. The catalysed reaction is a purine 2'-deoxy-D-ribonucleoside + phosphate = a purine nucleobase + 2-deoxy-alpha-D-ribose 1-phosphate. Functionally, catalyzes the reversible phosphorolytic breakdown of the N-glycosidic bond in the beta-(deoxy)ribonucleoside molecules, with the formation of the corresponding free purine bases and pentose-1-phosphate. The polypeptide is Purine nucleoside phosphorylase DeoD-type (Streptococcus suis (strain 98HAH33)).